The primary structure comprises 177 residues: Nucleoside triphosphate/diphosphate phosphatase (177 aa).

The Proton donor role is filled by Arg23. Positions 87, 103, 105, 107, 120, and 123 each coordinate Mg(2+).

Belongs to the Ntdp family. Requires Mg(2+) as cofactor.

The catalysed reaction is a ribonucleoside 5'-triphosphate + H2O = a ribonucleoside 5'-diphosphate + phosphate + H(+). It carries out the reaction a ribonucleoside 5'-diphosphate + H2O = a ribonucleoside 5'-phosphate + phosphate + H(+). Has nucleoside phosphatase activity towards nucleoside triphosphates and nucleoside diphosphates. This is Nucleoside triphosphate/diphosphate phosphatase from Streptococcus suis (strain 98HAH33).